We begin with the raw amino-acid sequence, 223 residues long: Crossover junction endodeoxyribonuclease RuvC (223 aa).

Catalysis depends on residues aspartate 12, glutamate 73, and aspartate 146. Aspartate 12, glutamate 73, and aspartate 146 together coordinate Mg(2+). The interval 182 to 223 (QGKLGKAKSTLNARNNAQVTGDAQVRAGHPSQFERPDRADPR) is disordered. A compositionally biased stretch (polar residues) spans 190-202 (STLNARNNAQVTG). Positions 213–223 (QFERPDRADPR) are enriched in basic and acidic residues.

It belongs to the RuvC family. As to quaternary structure, homodimer which binds Holliday junction (HJ) DNA. The HJ becomes 2-fold symmetrical on binding to RuvC with unstacked arms; it has a different conformation from HJ DNA in complex with RuvA. In the full resolvosome a probable DNA-RuvA(4)-RuvB(12)-RuvC(2) complex forms which resolves the HJ. The cofactor is Mg(2+).

Its subcellular location is the cytoplasm. It carries out the reaction Endonucleolytic cleavage at a junction such as a reciprocal single-stranded crossover between two homologous DNA duplexes (Holliday junction).. The RuvA-RuvB-RuvC complex processes Holliday junction (HJ) DNA during genetic recombination and DNA repair. Endonuclease that resolves HJ intermediates. Cleaves cruciform DNA by making single-stranded nicks across the HJ at symmetrical positions within the homologous arms, yielding a 5'-phosphate and a 3'-hydroxyl group; requires a central core of homology in the junction. The consensus cleavage sequence is 5'-(A/T)TT(C/G)-3'. Cleavage occurs on the 3'-side of the TT dinucleotide at the point of strand exchange. HJ branch migration catalyzed by RuvA-RuvB allows RuvC to scan DNA until it finds its consensus sequence, where it cleaves and resolves the cruciform DNA. The protein is Crossover junction endodeoxyribonuclease RuvC of Corynebacterium efficiens (strain DSM 44549 / YS-314 / AJ 12310 / JCM 11189 / NBRC 100395).